Consider the following 536-residue polypeptide: Hydroxylamine oxidoreductase (536 aa).

A signal peptide spans 1–26 (MFEIFKKPLSRIVGATFAFAGVTLLA). The heme c site is built by Cys116, Cys119, His120, His136, Cys160, Cys163, His164, His168, Cys179, Cys182, His183, His198, Cys223, Cys226, His227, Cys234, Cys237, His238, His241, Cys254, Cys257, and His258. His263 provides a ligand contact to hydroxylamine. Positions 274, 301, 304, 305, 311, 346, 349, 350, 443, and 451 each coordinate heme c.

Homotrimer; subunits are linked by two covalent bonds between Tyr-451 of one subunit and heme P460 of an adjacent subunit. The cofactor is heme c.

Its subcellular location is the anammoxosome. The enzyme catalyses hydroxylamine + 3 Fe(III)-[cytochrome c] = nitric oxide + 3 Fe(II)-[cytochrome c] + 3 H(+). Catalyzes the oxidation of hydroxylamine to nitric oxide with cytochrome c acting as an electron acceptor. Does not oxidize hydroxylamine to nitrite. Also able to catalyze the four-electron oxidation of hydrazine to N(2) in vitro with reduced efficiency; however, this reaction is probably not physiological. The sequence is that of Hydroxylamine oxidoreductase from Kuenenia stuttgartiensis.